A 266-amino-acid chain; its full sequence is Undecaprenyl-diphosphatase (266 aa).

The next 8 helical transmembrane spans lie at 4 to 24 (ILSA…PISS), 39 to 59 (LSII…IIYY), 86 to 106 (LKLI…GTFI), 112 to 132 (MFTL…ILML), 145 to 165 (ILLA…PGIS), 182 to 202 (KSAF…AILL), 210 to 230 (IFMV…FVVG), and 246 to 266 (LYYF…FVRI).

This sequence belongs to the UppP family.

Its subcellular location is the cell inner membrane. The enzyme catalyses di-trans,octa-cis-undecaprenyl diphosphate + H2O = di-trans,octa-cis-undecaprenyl phosphate + phosphate + H(+). Functionally, catalyzes the dephosphorylation of undecaprenyl diphosphate (UPP). Confers resistance to bacitracin. This chain is Undecaprenyl-diphosphatase, found in Borreliella burgdorferi (strain ATCC 35210 / DSM 4680 / CIP 102532 / B31) (Borrelia burgdorferi).